A 577-amino-acid polypeptide reads, in one-letter code: Urease subunit alpha (577 aa).

A Urease domain is found at 136 to 577 (GAIDCHVHLI…LPMAQRYFLF (442 aa)). Residues histidine 141, histidine 143, and lysine 224 each contribute to the Ni(2+) site. The residue at position 224 (lysine 224) is an N6-carboxylysine. Histidine 226 contacts substrate. Ni(2+) contacts are provided by histidine 253 and histidine 279. Residue histidine 327 is the Proton donor of the active site. Residue aspartate 367 coordinates Ni(2+).

This sequence belongs to the metallo-dependent hydrolases superfamily. Urease alpha subunit family. In terms of assembly, heterotrimer of UreA (gamma), UreB (beta) and UreC (alpha) subunits. Three heterotrimers associate to form the active enzyme. The cofactor is Ni cation. In terms of processing, carboxylation allows a single lysine to coordinate two nickel ions.

The protein localises to the cytoplasm. The enzyme catalyses urea + 2 H2O + H(+) = hydrogencarbonate + 2 NH4(+). It functions in the pathway nitrogen metabolism; urea degradation; CO(2) and NH(3) from urea (urease route): step 1/1. The sequence is that of Urease subunit alpha from Mycobacterium marinum (strain ATCC BAA-535 / M).